Reading from the N-terminus, the 295-residue chain is DegV domain-containing protein MG326 (295 aa).

Residues 4–292 form the DegV domain; it reads TAIITDSTAS…IDAFSISLLI (289 aa). T63 and S95 together coordinate hexadecanoate.

Its function is as follows. May bind long-chain fatty acids, such as palmitate, and may play a role in lipid transport or fatty acid metabolism. The sequence is that of DegV domain-containing protein MG326 from Mycoplasma genitalium (strain ATCC 33530 / DSM 19775 / NCTC 10195 / G37) (Mycoplasmoides genitalium).